The following is a 262-amino-acid chain: Large ribosomal subunit protein uL10m (262 aa).

The N-terminal 28 residues, methionine 1–histidine 28, are a transit peptide targeting the mitochondrion. The interval glycine 243–alanine 262 is disordered.

The protein belongs to the universal ribosomal protein uL10 family. As to quaternary structure, component of the mitochondrial ribosome large subunit (39S) which comprises a 16S rRNA and about 50 distinct proteins.

The protein localises to the mitochondrion. This Mus musculus (Mouse) protein is Large ribosomal subunit protein uL10m (Mrpl10).